The following is a 371-amino-acid chain: N-acetyldiaminopimelate deacetylase (371 aa).

D68 is a catalytic residue. E127 serves as the catalytic Proton acceptor.

It belongs to the peptidase M20A family. N-acetyldiaminopimelate deacetylase subfamily.

The enzyme catalyses N-acetyl-(2S,6S)-2,6-diaminopimelate + H2O = (2S,6S)-2,6-diaminopimelate + acetate. It functions in the pathway amino-acid biosynthesis; L-lysine biosynthesis via DAP pathway; LL-2,6-diaminopimelate from (S)-tetrahydrodipicolinate (acetylase route): step 3/3. Its function is as follows. Catalyzes the conversion of N-acetyl-diaminopimelate to diaminopimelate and acetate. The polypeptide is N-acetyldiaminopimelate deacetylase (Listeria monocytogenes serotype 4b (strain CLIP80459)).